The chain runs to 361 residues: Phenylalanine 4-monooxygenase, chloroplastic (361 aa).

The transit peptide at 1–55 (MLALRQGALLLSARGGQTTHDNLQLCAGPSRRPRARWISSAPRPSTLVERHIRPQ) directs the protein to the chloroplast. The segment at 47–67 (LVERHIRPQASTASDATTSTS) is disordered. Over residues 56–67 (ASTASDATTSTS) the composition is skewed to low complexity. Residues His-227, His-232, and Glu-272 each coordinate Fe cation.

The protein belongs to the biopterin-dependent aromatic amino acid hydroxylase family. Fe(2+) is required as a cofactor.

It localises to the plastid. Its subcellular location is the chloroplast. The catalysed reaction is (6R)-L-erythro-5,6,7,8-tetrahydrobiopterin + L-phenylalanine + O2 = (4aS,6R)-4a-hydroxy-L-erythro-5,6,7,8-tetrahydrobiopterin + L-tyrosine. Catalyzes the hydroxylation of L-phenylalanine to L-tyrosine. Can functionally complement an Escherichia coli tyrosine auxotroph. In Chlamydomonas reinhardtii (Chlamydomonas smithii), this protein is Phenylalanine 4-monooxygenase, chloroplastic.